Consider the following 305-residue polypeptide: Beta-lactamase ROB-1 (305 aa).

The N-terminal stretch at 1-33 (MLNKLKIGTLLLLTLTACSPNSVHSVTSNPQPA) is a signal peptide. Serine 86 acts as the Acyl-ester intermediate in catalysis. 248–250 (KSG) provides a ligand contact to substrate.

This sequence belongs to the class-A beta-lactamase family.

It catalyses the reaction a beta-lactam + H2O = a substituted beta-amino acid. This is Beta-lactamase ROB-1 (rob1) from Actinobacillus pleuropneumoniae (Haemophilus pleuropneumoniae).